We begin with the raw amino-acid sequence, 139 residues long: Large ribosomal subunit protein bL17 (139 aa).

It belongs to the bacterial ribosomal protein bL17 family. In terms of assembly, part of the 50S ribosomal subunit. Contacts protein L32.

This Azorhizobium caulinodans (strain ATCC 43989 / DSM 5975 / JCM 20966 / LMG 6465 / NBRC 14845 / NCIMB 13405 / ORS 571) protein is Large ribosomal subunit protein bL17.